A 424-amino-acid polypeptide reads, in one-letter code: MFALADINSFYASCEKVFRPDLRNEPVIVLSNNDGCVIARSPEAKALGIRMGQPWFQVRQMRLEKKIHVFSSNYALYHSMSQRVMAVLESLSPAVEPYSIDEMFIDLRGINHCISPEFFGHQLREQVKSWTGLTMGVGIAPTKTLAKSAQWATKQWPQFSGVVALTAENRNRILKLLGLQPVGEVWGVGHRLTEKLNALGINTALQLAQANTAFIRKNFSVILERTVRELNGESCISLEEAPPAKQQIVCSRSFGERITDKDAMHQAVVQYAERAAEKLRGERQYCRQVTTFVRTSPFAVKEPCYSNAAVEKLPLPTQDSRDIIAAACRALNHVWREGYRYMKAGVMLADFTPSGIAQPGLFDEIQPRKNSEKLMKTLDELNQSGKGKVWFAGRGTAPEWQMKREMLSQCYTTKWRDIPLARLG.

Positions 2–189 (FALADINSFY…QPVGEVWGVG (188 aa)) constitute a UmuC domain.

It belongs to the DNA polymerase type-Y family.

In terms of biological role, involved in UV protection and mutation. The chain is Protein ImpB (impB) from Salmonella typhimurium.